The following is a 348-amino-acid chain: Protein pelota homolog (348 aa).

The protein belongs to the eukaryotic release factor 1 family. Pelota subfamily. As to quaternary structure, monomer. Requires a divalent metal cation as cofactor.

Its subcellular location is the cytoplasm. Its function is as follows. May function in recognizing stalled ribosomes, interact with stem-loop structures in stalled mRNA molecules, and effect endonucleolytic cleavage of the mRNA. May play a role in the release non-functional ribosomes and degradation of damaged mRNAs. Has endoribonuclease activity. The protein is Protein pelota homolog of Methanococcus vannielii (strain ATCC 35089 / DSM 1224 / JCM 13029 / OCM 148 / SB).